Consider the following 208-residue polypeptide: Ribosome maturation factor RimP (208 aa).

Belongs to the RimP family.

The protein localises to the cytoplasm. Its function is as follows. Required for maturation of 30S ribosomal subunits. The protein is Ribosome maturation factor RimP of Bartonella tribocorum (strain CIP 105476 / IBS 506).